The primary structure comprises 838 residues: Translation initiation factor IF-2 (838 aa).

The disordered stretch occupies residues 50-108; the sequence is VQSGKKPESPEKKDIKQNTQKEAPETQTQQKPIEQEVETKQNIDSTPIKVEPKQESLAS. A compositionally biased stretch (basic and acidic residues) spans 54 to 65; sequence KKPESPEKKDIK. Positions 66–81 are enriched in polar residues; that stretch reads QNTQKEAPETQTQQKP. The tr-type G domain maps to 337 to 506; sequence SRAPVVTIMG…LLQAELLELK (170 aa). The interval 346 to 353 is G1; that stretch reads GHVDHGKT. Position 346–353 (346–353) interacts with GTP; it reads GHVDHGKT. The tract at residues 371–375 is G2; sequence GITQH. The tract at residues 392 to 395 is G3; that stretch reads DTPG. Residues 392–396 and 446–449 contribute to the GTP site; these read DTPGH and NKMD. Positions 446–449 are G4; the sequence is NKMD. Residues 482–484 are G5; that stretch reads SAK.

Belongs to the TRAFAC class translation factor GTPase superfamily. Classic translation factor GTPase family. IF-2 subfamily.

The protein resides in the cytoplasm. In terms of biological role, one of the essential components for the initiation of protein synthesis. Protects formylmethionyl-tRNA from spontaneous hydrolysis and promotes its binding to the 30S ribosomal subunits. Also involved in the hydrolysis of GTP during the formation of the 70S ribosomal complex. The protein is Translation initiation factor IF-2 of Campylobacter fetus subsp. fetus (strain 82-40).